The sequence spans 262 residues: Type III pantothenate kinase (262 aa).

9 to 16 (DIGNTNIV) contacts ATP. Substrate is bound by residues Tyr-103 and 110–113 (GVDR). Asp-112 functions as the Proton acceptor in the catalytic mechanism. Position 132 (Asp-132) interacts with K(+). An ATP-binding site is contributed by Thr-135. Thr-187 lines the substrate pocket.

The protein belongs to the type III pantothenate kinase family. In terms of assembly, homodimer. Requires NH4(+) as cofactor. K(+) is required as a cofactor.

The protein resides in the cytoplasm. The enzyme catalyses (R)-pantothenate + ATP = (R)-4'-phosphopantothenate + ADP + H(+). The protein operates within cofactor biosynthesis; coenzyme A biosynthesis; CoA from (R)-pantothenate: step 1/5. Catalyzes the phosphorylation of pantothenate (Pan), the first step in CoA biosynthesis. This is Type III pantothenate kinase from Finegoldia magna (strain ATCC 29328 / DSM 20472 / WAL 2508) (Peptostreptococcus magnus).